The sequence spans 159 residues: Small ribosomal subunit protein uS7 (159 aa).

Belongs to the universal ribosomal protein uS7 family. As to quaternary structure, part of the 30S ribosomal subunit. Contacts proteins S9 and S11.

Functionally, one of the primary rRNA binding proteins, it binds directly to 16S rRNA where it nucleates assembly of the head domain of the 30S subunit. Is located at the subunit interface close to the decoding center, probably blocks exit of the E-site tRNA. The chain is Small ribosomal subunit protein uS7 from Wolbachia pipientis wMel.